The primary structure comprises 67 residues: Conotoxin Cl6.6a (67 aa).

A signal peptide spans 1–24 (MKLTCVLIAAVLLLAVCQLDSADA). The propeptide occupies 25–37 (TGYMRKNPSLRSP). 3 disulfides stabilise this stretch: Cys43–Cys57, Cys50–Cys61, and Cys56–Cys65.

It belongs to the conotoxin O1 superfamily. As to expression, expressed by the venom duct.

It localises to the secreted. The sequence is that of Conotoxin Cl6.6a from Californiconus californicus (California cone).